The sequence spans 959 residues: Translation initiation factor IF-2 (959 aa).

Residues 33 to 373 are disordered; that stretch reads SHASSVEEAD…PVTERKFHEL (341 aa). Positions 46–60 are enriched in polar residues; it reads IASSFSAGVTKNVQA. A compositionally biased stretch (basic and acidic residues) spans 63–73; sequence AKDKQVAEQKA. Low complexity predominate over residues 76-100; that stretch reads AKATTPQPAASKAAEKPAAATQEAS. 3 stretches are compositionally biased toward basic and acidic residues: residues 112-125, 134-143, and 179-192; these read FKAEREARAKEQVA, SNDRKSDYRQ, and NDGHRQAGNRDKNR. Residues 193-211 are compositionally biased toward polar residues; sequence SFNANSRQQDIGRQGQTQA. 2 stretches are compositionally biased toward basic and acidic residues: residues 234–258 and 266–276; these read ARQRESRFREQEEAKRLEQQARQEA and QTEDKKHREAP. The span at 277–287 shows a compositional bias: low complexity; that stretch reads AKATEPAEPVA. The span at 306–323 shows a compositional bias: basic and acidic residues; the sequence is NRPDKAHDRDHGLEDGQK. Positions 328-346 are enriched in low complexity; the sequence is SWNSQNQVRNQKNSNWNNN. Residues 347 to 357 show a composition bias toward basic residues; sequence KKNKKGKHHKN. The region spanning 460–629 is the tr-type G domain; sequence ERAPVVTIMG…LLVAEVEELK (170 aa). The tract at residues 469-476 is G1; that stretch reads GHVDHGKT. 469 to 476 contacts GTP; sequence GHVDHGKT. The tract at residues 494–498 is G2; that stretch reads GITQH. Positions 515 to 518 are G3; that stretch reads DTPG. GTP is bound by residues 515 to 519 and 569 to 572; these read DTPGH and NKID. Positions 569–572 are G4; it reads NKID. The interval 605 to 607 is G5; sequence SAK.

This sequence belongs to the TRAFAC class translation factor GTPase superfamily. Classic translation factor GTPase family. IF-2 subfamily.

It is found in the cytoplasm. Its function is as follows. One of the essential components for the initiation of protein synthesis. Protects formylmethionyl-tRNA from spontaneous hydrolysis and promotes its binding to the 30S ribosomal subunits. Also involved in the hydrolysis of GTP during the formation of the 70S ribosomal complex. This is Translation initiation factor IF-2 from Streptococcus equi subsp. zooepidemicus (strain H70).